The following is a 91-amino-acid chain: Early E3B 10.4 kDa protein (91 aa).

Positions 1 to 22 (MIPRNFFFTILICPFNVCATFT) are cleaved as a signal peptide. The Lumenal segment spans residues 23–34 (AVATASPDCIGP). The chain crosses the membrane as a helical span at residues 35–60 (FASYALFAFVTCICVCSIVCLVINFF). At 61–91 (QLVDWIFVRIAYLRHHPEYRNQNVAALLRLI) the chain is on the cytoplasmic side.

Belongs to the adenoviridae E3B family.

It localises to the host endoplasmic reticulum membrane. Down-regulates the EGF receptor. The protein is Early E3B 10.4 kDa protein of Human adenovirus B serotype 3 (HAdV-3).